The sequence spans 379 residues: tRNA 2-selenouridine synthase (379 aa).

Residues F17–E140 enclose the Rhodanese domain. C100 functions as the S-selanylcysteine intermediate in the catalytic mechanism.

It belongs to the SelU family. Monomer.

The enzyme catalyses 5-methylaminomethyl-2-thiouridine(34) in tRNA + selenophosphate + (2E)-geranyl diphosphate + H2O + H(+) = 5-methylaminomethyl-2-selenouridine(34) in tRNA + (2E)-thiogeraniol + phosphate + diphosphate. It carries out the reaction 5-methylaminomethyl-2-thiouridine(34) in tRNA + (2E)-geranyl diphosphate = 5-methylaminomethyl-S-(2E)-geranyl-thiouridine(34) in tRNA + diphosphate. The catalysed reaction is 5-methylaminomethyl-S-(2E)-geranyl-thiouridine(34) in tRNA + selenophosphate + H(+) = 5-methylaminomethyl-2-(Se-phospho)selenouridine(34) in tRNA + (2E)-thiogeraniol. It catalyses the reaction 5-methylaminomethyl-2-(Se-phospho)selenouridine(34) in tRNA + H2O = 5-methylaminomethyl-2-selenouridine(34) in tRNA + phosphate. Involved in the post-transcriptional modification of the uridine at the wobble position (U34) of tRNA(Lys), tRNA(Glu) and tRNA(Gln). Catalyzes the conversion of 2-thiouridine (S2U-RNA) to 2-selenouridine (Se2U-RNA). Acts in a two-step process involving geranylation of 2-thiouridine (S2U) to S-geranyl-2-thiouridine (geS2U) and subsequent selenation of the latter derivative to 2-selenouridine (Se2U) in the tRNA chain. This chain is tRNA 2-selenouridine synthase, found in Hahella chejuensis (strain KCTC 2396).